The sequence spans 94 residues: MKHDPQFRALTPKWHQGYRFQYEPAQKAHVVLYPEGMIKLNDSAALIGGLIDGKRTITAIIHELQQQFPNVPELGMDVDEFMEGTKKKNWIDLV.

The protein belongs to the PqqD family. In terms of assembly, monomer. Interacts with PqqE.

Its pathway is cofactor biosynthesis; pyrroloquinoline quinone biosynthesis. Its function is as follows. Functions as a PqqA binding protein and presents PqqA to PqqE, in the pyrroloquinoline quinone (PQQ) biosynthetic pathway. The protein is PqqA binding protein of Pseudomonas savastanoi pv. phaseolicola (strain 1448A / Race 6) (Pseudomonas syringae pv. phaseolicola (strain 1448A / Race 6)).